Here is a 210-residue protein sequence, read N- to C-terminus: Thiamine-phosphate synthase (210 aa).

4-amino-2-methyl-5-(diphosphooxymethyl)pyrimidine-binding positions include 39 to 43 and Asn-71; that span reads QLREK. 2 residues coordinate Mg(2+): Asp-72 and Asp-91. Ser-110 is a 4-amino-2-methyl-5-(diphosphooxymethyl)pyrimidine binding site. 134 to 136 is a 2-[(2R,5Z)-2-carboxy-4-methylthiazol-5(2H)-ylidene]ethyl phosphate binding site; it reads TPT. Lys-137 provides a ligand contact to 4-amino-2-methyl-5-(diphosphooxymethyl)pyrimidine. Gly-163 is a 2-[(2R,5Z)-2-carboxy-4-methylthiazol-5(2H)-ylidene]ethyl phosphate binding site.

It belongs to the thiamine-phosphate synthase family. Mg(2+) is required as a cofactor.

It carries out the reaction 2-[(2R,5Z)-2-carboxy-4-methylthiazol-5(2H)-ylidene]ethyl phosphate + 4-amino-2-methyl-5-(diphosphooxymethyl)pyrimidine + 2 H(+) = thiamine phosphate + CO2 + diphosphate. The enzyme catalyses 2-(2-carboxy-4-methylthiazol-5-yl)ethyl phosphate + 4-amino-2-methyl-5-(diphosphooxymethyl)pyrimidine + 2 H(+) = thiamine phosphate + CO2 + diphosphate. The catalysed reaction is 4-methyl-5-(2-phosphooxyethyl)-thiazole + 4-amino-2-methyl-5-(diphosphooxymethyl)pyrimidine + H(+) = thiamine phosphate + diphosphate. It functions in the pathway cofactor biosynthesis; thiamine diphosphate biosynthesis; thiamine phosphate from 4-amino-2-methyl-5-diphosphomethylpyrimidine and 4-methyl-5-(2-phosphoethyl)-thiazole: step 1/1. Functionally, condenses 4-methyl-5-(beta-hydroxyethyl)thiazole monophosphate (THZ-P) and 2-methyl-4-amino-5-hydroxymethyl pyrimidine pyrophosphate (HMP-PP) to form thiamine monophosphate (TMP). This is Thiamine-phosphate synthase from Campylobacter jejuni subsp. jejuni serotype O:6 (strain 81116 / NCTC 11828).